The following is a 799-amino-acid chain: Putative mRNA-capping enzyme P5 (799 aa).

It belongs to the phytoreovirus protein P5 family.

Its subcellular location is the virion. The protein resides in the host cytoplasm. The catalysed reaction is a 5'-end diphospho-ribonucleoside in mRNA + GTP + H(+) = a 5'-end (5'-triphosphoguanosine)-ribonucleoside in mRNA + diphosphate. It functions in the pathway mRNA processing; mRNA capping. Functionally, enzyme involved in mRNA capping (Potential). Binds to GTP and might have guanylyltransferase activity. Together with the RNA-directed RNA polymerase P1 and protein P7, forms an transcriptional complex positioned near the channels situated at each of the five-fold vertices of the core. In Nephotettix cincticeps (Green rice leafhopper), this protein is Putative mRNA-capping enzyme P5.